A 422-amino-acid chain; its full sequence is L-cysteine:1D-myo-inositol 2-amino-2-deoxy-alpha-D-glucopyranoside ligase (422 aa).

Cys-43 contributes to the Zn(2+) binding site. L-cysteinyl-5'-AMP contacts are provided by residues 43-46, Thr-58, and 81-83; these read CGIT and NVT. A 'HIGH' region motif is present at residues 45-55; sequence ITPYDATHLGH. Residues 185–200 are compositionally biased toward basic and acidic residues; that stretch reads AERGGDPDRPGKRNRL. Residues 185–221 are disordered; that stretch reads AERGGDPDRPGKRNRLDPMLWRGRRPGEPSWPGPRGV. The 'ERGGDP' region motif lies at 186 to 191; it reads ERGGDP. L-cysteinyl-5'-AMP is bound at residue Trp-227. Cys-231 serves as a coordination point for Zn(2+). 249–251 serves as a coordination point for L-cysteinyl-5'-AMP; that stretch reads GSD. A Zn(2+)-binding site is contributed by His-256. An L-cysteinyl-5'-AMP-binding site is contributed by Ile-288. The 'KMSKS' region signature appears at 294 to 298; it reads KMSKS.

It belongs to the class-I aminoacyl-tRNA synthetase family. MshC subfamily. Monomer. Requires Zn(2+) as cofactor.

It carries out the reaction 1D-myo-inositol 2-amino-2-deoxy-alpha-D-glucopyranoside + L-cysteine + ATP = 1D-myo-inositol 2-(L-cysteinylamino)-2-deoxy-alpha-D-glucopyranoside + AMP + diphosphate + H(+). Catalyzes the ATP-dependent condensation of GlcN-Ins and L-cysteine to form L-Cys-GlcN-Ins. The sequence is that of L-cysteine:1D-myo-inositol 2-amino-2-deoxy-alpha-D-glucopyranoside ligase from Geodermatophilus obscurus (strain ATCC 25078 / DSM 43160 / JCM 3152 / CCUG 61914 / KCC A-0152 / KCTC 9177 / NBRC 13315 / NRRL B-3577 / G-20).